The chain runs to 245 residues: Triosephosphate isomerase (245 aa).

Substrate is bound at residue 9–11; that stretch reads NWK. Catalysis depends on H92, which acts as the Electrophile. The active-site Proton acceptor is the E164. Substrate contacts are provided by residues G170, S209, and 230-231; that span reads GG.

This sequence belongs to the triosephosphate isomerase family. Homodimer.

It is found in the cytoplasm. The enzyme catalyses D-glyceraldehyde 3-phosphate = dihydroxyacetone phosphate. It functions in the pathway carbohydrate biosynthesis; gluconeogenesis. Its pathway is carbohydrate degradation; glycolysis; D-glyceraldehyde 3-phosphate from glycerone phosphate: step 1/1. Functionally, involved in the gluconeogenesis. Catalyzes stereospecifically the conversion of dihydroxyacetone phosphate (DHAP) to D-glyceraldehyde-3-phosphate (G3P). This is Triosephosphate isomerase from Cupriavidus pinatubonensis (strain JMP 134 / LMG 1197) (Cupriavidus necator (strain JMP 134)).